Here is a 602-residue protein sequence, read N- to C-terminus: Elongation factor 4 (602 aa).

In terms of domain architecture, tr-type G spans 6–188; that stretch reads DHIRNFSIVA…AIVTQLPAPK (183 aa). Residues 18–23 and 135–138 contribute to the GTP site; these read DHGKST and NKID.

Belongs to the TRAFAC class translation factor GTPase superfamily. Classic translation factor GTPase family. LepA subfamily.

It localises to the cell inner membrane. It catalyses the reaction GTP + H2O = GDP + phosphate + H(+). Its function is as follows. Required for accurate and efficient protein synthesis under certain stress conditions. May act as a fidelity factor of the translation reaction, by catalyzing a one-codon backward translocation of tRNAs on improperly translocated ribosomes. Back-translocation proceeds from a post-translocation (POST) complex to a pre-translocation (PRE) complex, thus giving elongation factor G a second chance to translocate the tRNAs correctly. Binds to ribosomes in a GTP-dependent manner. This chain is Elongation factor 4, found in Brucella anthropi (strain ATCC 49188 / DSM 6882 / CCUG 24695 / JCM 21032 / LMG 3331 / NBRC 15819 / NCTC 12168 / Alc 37) (Ochrobactrum anthropi).